A 128-amino-acid polypeptide reads, in one-letter code: 3-aminoacrylate deaminase RutC (128 aa).

It belongs to the RutC family.

It catalyses the reaction (Z)-3-aminoacrylate + H2O + H(+) = 3-oxopropanoate + NH4(+). In terms of biological role, involved in pyrimidine catabolism. Catalyzes the deamination of 3-aminoacrylate to malonic semialdehyde, a reaction that can also occur spontaneously. RutC may facilitate the reaction and modulate the metabolic fitness, rather than catalyzing essential functions. This chain is 3-aminoacrylate deaminase RutC, found in Agrobacterium fabrum (strain C58 / ATCC 33970) (Agrobacterium tumefaciens (strain C58)).